Consider the following 856-residue polypeptide: MSITASTCGSPSSSESLPNGDLFKELWSKLKECHDKDLQELLMKIGKLKKERCLDAQRLEEFYTKNQHLREQQKTLHDTIKVLEDRLRAGLCDRCTVTEEHMRKKQQEFENIRQQNLKLITELMNDKNALQDENKRLSEQLHDMQKNRHRRKSDEENPADTGDGEDGVIPDSPLSTFSLSMVSRMRRKKENKHVRYTEQTQEDALTFDRKISSGTRPQISTQVNMRKGEDVLVAETLELAPLPNKYEVCTEKPVFNLATVVAETLGLDAMEESQSQSVFNQPGITCAPLFHKSEDSSPRQVKVEFTEGSMEGFQTNDDDTEWNRREASPVFGEPVRNIRRGTDMDCSSPPLPVGLSSKLKSHCSRNAPDFSVHAKAEDGALLTRLSHCIETDSVISQCSSNRQDVLRPSPNKSDAQMGKYIFDSEQHKQTGNRYGKRKNAEAEQEESCESSFDKENNIPLKDISGARHSMLDKPLDLSDRFSVLRPQDRSHESSSRTKLTISLVPEKPDTKTILHIDLKENLHQQTRQKKVFVSGLVEHSAFNLHEDNEVTEEDNKPFHDSETEIMCHVPKRKPRAVHRGVQPTSVLQPNLHMVHACLESQGRPPIDNMQWSIDPGADLSQYEMDMTMEDSKSGSPAKPELEDMDYTYVNESCLLKLKMGDPDDSEAESKDQDSFGEMFDKTEYGEYASYIKDKSPSQSISCKERSDIPSIENKKITSEKEHESKGEPYQKQKAFVEPYFQRPERKKPAIDFPHIEVVRNKEERRKMLGHTCKECELYYADLPEEERAKKLASCSRHRFRYIPPSTPENFWEVGFPSTQTCKDRGYIKEELSPCQRPRRRQPYNAIFTSKIKEQKT.

The tract at residues 25 to 48 (ELWSKLKECHDKDLQELLMKIGKL) is essential for binding to the MRN complex and for RPA focus formation on DNA damage. Coiled-coil stretches lie at residues 38 to 87 (LQEL…EDRL) and 120 to 141 (ITEL…SEQL). Disordered regions lie at residues 143-174 (DMQK…DSPL) and 423-456 (DSEQ…DKEN). The segment covering 156–168 (ENPADTGDGEDGV) has biased composition (acidic residues). A damage-recruitment motif region spans residues 493–515 (SSSRTKLTISLVPEKPDTKTILH). Residues 695-732 (SPSQSISCKERSDIPSIENKKITSEKEHESKGEPYQKQ) are disordered. The segment covering 702–730 (CKERSDIPSIENKKITSEKEHESKGEPYQ) has biased composition (basic and acidic residues). T806 is subject to Phosphothreonine. At T818 the chain carries Phosphothreonine; by ATR.

This sequence belongs to the COM1/SAE2/CtIP family. In terms of assembly, homotetramer; formed by antiparallel association of helical extensions protruding from the N-termini of two parallel coiled-coil dimers. Interacts with the MRN complex; the interaction links DNA sensing to resection. Interacts with samhd1. Post-translationally, phosphorylation at Thr-818 by atr promotes recruitment to double-strand breaks (DSBs).

The protein resides in the nucleus. Its subcellular location is the chromosome. Its function is as follows. Endonuclease that cooperates with the MRE11-RAD50-NBN (MRN) complex in DNA-end resection, the first step of double-strand break (DSB) repair through the homologous recombination (HR) pathway. Functions downstream of the MRN complex and ATM, promotes ATR activation and its recruitment to DSBs in the S/G2 phase facilitating the generation of ssDNA. Specifically promotes the endonuclease activity of the MRN complex to clear DNA ends containing protein adducts: recruited to DSBs by nbn following phosphorylation, and promotes the endonuclease of mre11 to clear protein-DNA adducts and generate clean double-strand break ends. The MRN complex and rbbp8/CtIP are also required for chromosome alignment during metaphase. This is DNA endonuclease RBBP8 (rbbp8) from Xenopus laevis (African clawed frog).